A 473-amino-acid chain; its full sequence is Sun domain-containing protein 1 (473 aa).

The tract at residues Met1–Thr47 is disordered. Residues Ile7–Thr47 are compositionally biased toward polar residues. Coiled-coil stretches lie at residues Ile163–Val191 and Glu204–Ile235. A disordered region spans residues His237 to Gln257. The segment covering Pro248 to Gln257 has biased composition (polar residues). Residues His262–Ile282 form a helical membrane-spanning segment. The SUN domain occupies Gly279 to Val443. Residues Val443–Ala473 form a disordered region.

Its subcellular location is the nucleus membrane. The protein resides in the nucleus envelope. Its function is as follows. Involved in centrosome attachment to the nucleus. Required for zyg-12 localization to the nuclear envelope. Together with pot-1, it is required to anchor telomeres to the nuclear envelope in embryos. In Caenorhabditis elegans, this protein is Sun domain-containing protein 1.